The sequence spans 115 residues: MELILSAGIGTLTASGVYLLLRPRTYQVIIGLSLLSFAVNLFIFGMGRLRVNAPPILDPGGVGDLARYTDPVPQALVLTAIVIGFAMTALFLVVLLASRGFTGTDHVDGREQRGD.

Helical transmembrane passes span 4–21, 28–47, and 75–97; these read ILSA…YLLL, VIIG…FGMG, and ALVL…VLLA.

It belongs to the CPA3 antiporters (TC 2.A.63) subunit C family. In terms of assembly, may form a hetero-oligomeric complex that consists of six subunits: PhaAB, PhaC, PhaD, PhaE, PhaF and PhaG.

It is found in the cell membrane. Its function is as follows. Part of a K(+) efflux system which is required for the adaptation of R.meliloti to alkaline pH as well as for the infection process during symbiotic nodule development. This is Probable K(+)/H(+) antiporter subunit C (phaC) from Rhizobium meliloti (strain 1021) (Ensifer meliloti).